The chain runs to 504 residues: Xanthotoxol synthase (504 aa).

Residues 3 to 23 (PAAIFLILAIPIASVYLLFYH) traverse the membrane as a helical segment. Residues 363–368 (PGPLLI) form a substrate specificity region. A heme-binding site is contributed by Cys-444.

It belongs to the cytochrome P450 family. Heme is required as a cofactor.

The protein resides in the microsome membrane. It carries out the reaction psoralen + reduced [NADPH--hemoprotein reductase] + O2 = xanthotoxol + oxidized [NADPH--hemoprotein reductase] + H2O + H(+). The enzyme catalyses 6-methoxycoumarin + reduced [NADPH--hemoprotein reductase] + O2 = scopoletin + oxidized [NADPH--hemoprotein reductase] + H2O + H(+). It functions in the pathway secondary metabolite biosynthesis. Its function is as follows. Involved in the biosynthesis of coumarins and furanocoumarins (FCs), natural products required for defense responses against attacks by predators with potential medical and agroindustrial usages such as anticoagulant, rodenticide and artificial vanilla substitutes. Catalyzes the conversion of psoralen into xanthotoxol and of 6-methoxycoumarin into scopoletin. Can also convert with a lower efficiency scopoletin into fraxetin and 7-methoxycoumarin into daphnetin-7-methylether, and use 7-methoxy-3-methylcoumarin as substrate. The chain is Xanthotoxol synthase from Pastinaca sativa (Wild parsnip).